The primary structure comprises 880 residues: GATOR2 complex protein MIOS-A (880 aa).

6 WD repeats span residues 60–102 (SDTP…NSKC), 113–157 (KHAR…TPEV), 185–224 (GQND…QKMF), 226–264 (NTKA…KPVL), 268–309 (EQPK…TPIG), and 399–441 (RLRA…KQYA). The C4-type zinc-finger motif lies at 740-786 (VSCNFCGKSISYSCSSVPHQGRGFSQYGVSGSPTKSKFTSCPGCRKP). 13 residues coordinate Zn(2+): C742, C745, C780, C783, C793, C832, C835, H837, H840, H843, C854, C859, and C863. The RING-type; atypical zinc-finger motif lies at 787-868 (LPRCALCLIN…CSCKCMQLDT (82 aa)).

It belongs to the WD repeat mio family. As to quaternary structure, component of the GATOR2 subcomplex, composed of MIOS, SEC13, SEH1L, WDR24 and WDR59. The GATOR2 complex interacts with CASTOR1 and CASTOR2; the interaction is negatively regulated by arginine. The GATOR2 complex interacts with SESN1, SESN2 and SESN3; the interaction is negatively regulated by amino acids. Interacts with SAR1; the interaction is direct, disrupted by leucine and mediates the interaction of SAR1 with the GATOR2 complex to negatively regulate the TORC1 signaling upon leucine deprivation.

The protein resides in the lysosome membrane. Its activity is regulated as follows. The GATOR2 complex is negatively regulated by the upstream amino acid sensors CASTOR1 and SESN2, which sequester the GATOR2 complex in absence of amino acids. In the presence of abundant amino acids, GATOR2 is released from CASTOR1 and SESN2 and activated. As a component of the GATOR2 complex, functions as an activator of the amino acid-sensing branch of the mTORC1 signaling pathway. The GATOR2 complex indirectly activates mTORC1 through the inhibition of the GATOR1 subcomplex. GATOR2 probably acts as an E3 ubiquitin-protein ligase toward GATOR1. In the presence of abundant amino acids, the GATOR2 complex mediates ubiquitination of the NPRL2 core component of the GATOR1 complex, leading to GATOR1 inactivation. In the absence of amino acids, GATOR2 is inhibited, activating the GATOR1 complex. Within the GATOR2 complex, MIOS is required to prevent autoubiquitination of WDR24, the catalytic subunit of the complex. This is GATOR2 complex protein MIOS-A from Xenopus laevis (African clawed frog).